The primary structure comprises 145 residues: Basic phospholipase A2 PC14 (145 aa).

A signal peptide spans 1–21 (MYPAHLLLLLAVCVSLLGASA). A propeptide spanning residues 22 to 27 (IPPLPL) is cleaved from the precursor. Cystine bridges form between cysteine 38–cysteine 98, cysteine 54–cysteine 144, cysteine 56–cysteine 72, cysteine 71–cysteine 125, cysteine 78–cysteine 118, cysteine 87–cysteine 111, and cysteine 105–cysteine 116. Residues tyrosine 55, glycine 57, and glycine 59 each contribute to the Ca(2+) site. Residue histidine 75 is part of the active site. A Ca(2+)-binding site is contributed by aspartate 76. The active site involves aspartate 119.

Belongs to the phospholipase A2 family. Group I subfamily. D49 sub-subfamily. It depends on Ca(2+) as a cofactor.

Its subcellular location is the secreted. The enzyme catalyses a 1,2-diacyl-sn-glycero-3-phosphocholine + H2O = a 1-acyl-sn-glycero-3-phosphocholine + a fatty acid + H(+). PLA2 catalyzes the calcium-dependent hydrolysis of the 2-acyl groups in 3-sn-phosphoglycerides. The protein is Basic phospholipase A2 PC14 of Laticauda laticaudata (Blue-ringed sea krait).